The primary structure comprises 410 residues: Zinc transporter ttm-1 (410 aa).

Composition is skewed to low complexity over residues Met1–Leu13 and Ser35–Asp46. A disordered region spans residues Met1–Lys94. Residues Met1 to Lys103 are Cytoplasmic-facing. Positions His50 to Thr69 are enriched in basic residues. A helical transmembrane segment spans residues Val104 to Phe124. The Extracellular portion of the chain corresponds to Trp125–Leu129. The chain crosses the membrane as a helical span at residues Ala130–Phe150. Over Ala151–Glu171 the chain is Cytoplasmic. A helical transmembrane segment spans residues Val172–Val192. The Extracellular portion of the chain corresponds to Ala193–Val208. A helical transmembrane segment spans residues Met209 to Phe229. The Cytoplasmic segment spans residues Gly230–Ala258. The helical transmembrane segment at Leu259–Ile279 threads the bilayer. Residue Arg280 is a topological domain, extracellular. Residues Phe281–Phe301 form a helical membrane-spanning segment. Residues Thr302–Ala410 are Cytoplasmic-facing.

The protein belongs to the cation diffusion facilitator (CDF) transporter (TC 2.A.4) family. SLC30A subfamily. Isoform a: Expressed in the hypodermis and the intestine. Isoform b: Expressed in the intestine, head neurons, seam cells, hypodermis, and the vulva.

The protein resides in the cytoplasmic vesicle membrane. The protein localises to the apical cell membrane. Functionally, promotes excretion of zinc from intestinal cells into the intestinal lumen in response to increased dietary zinc. Involved in cadmium resistance, possibly by promoting its transport from cells. Involved in resistance to B.thuringiensis pore-forming toxin Cry5B downstream of the sek-1 and pmk-1 MAPK kinase pathway. The polypeptide is Zinc transporter ttm-1 (Caenorhabditis elegans).